A 242-amino-acid polypeptide reads, in one-letter code: Uridylate kinase (242 aa).

15–18 contacts ATP; sequence KLSG. Position 57 (Gly-57) interacts with UMP. Residues Gly-58 and Arg-62 each contribute to the ATP site. Residues Asp-78 and 139 to 146 contribute to the UMP site; that span reads TGNPFFTT. ATP-binding residues include Thr-166, Tyr-172, and Asp-175.

Belongs to the UMP kinase family. Homohexamer.

Its subcellular location is the cytoplasm. The catalysed reaction is UMP + ATP = UDP + ADP. Its pathway is pyrimidine metabolism; CTP biosynthesis via de novo pathway; UDP from UMP (UMPK route): step 1/1. With respect to regulation, inhibited by UTP. In terms of biological role, catalyzes the reversible phosphorylation of UMP to UDP. This is Uridylate kinase from Acinetobacter baumannii (strain ATCC 17978 / DSM 105126 / CIP 53.77 / LMG 1025 / NCDC KC755 / 5377).